Here is a 314-residue protein sequence, read N- to C-terminus: ATP synthase gamma chain (314 aa).

It belongs to the ATPase gamma chain family. As to quaternary structure, F-type ATPases have 2 components, CF(1) - the catalytic core - and CF(0) - the membrane proton channel. CF(1) has five subunits: alpha(3), beta(3), gamma(1), delta(1), epsilon(1). CF(0) has three main subunits: a, b and c.

The protein resides in the cell inner membrane. Functionally, produces ATP from ADP in the presence of a proton gradient across the membrane. The gamma chain is believed to be important in regulating ATPase activity and the flow of protons through the CF(0) complex. The polypeptide is ATP synthase gamma chain (Gloeobacter violaceus (strain ATCC 29082 / PCC 7421)).